A 417-amino-acid chain; its full sequence is Serine hydroxymethyltransferase (417 aa).

Residues Leu-117 and Gly-121–Leu-123 each bind (6S)-5,6,7,8-tetrahydrofolate. Lys-226 carries the N6-(pyridoxal phosphate)lysine modification.

This sequence belongs to the SHMT family. As to quaternary structure, homodimer. The cofactor is pyridoxal 5'-phosphate.

It is found in the cytoplasm. The enzyme catalyses (6R)-5,10-methylene-5,6,7,8-tetrahydrofolate + glycine + H2O = (6S)-5,6,7,8-tetrahydrofolate + L-serine. It participates in one-carbon metabolism; tetrahydrofolate interconversion. It functions in the pathway amino-acid biosynthesis; glycine biosynthesis; glycine from L-serine: step 1/1. In terms of biological role, catalyzes the reversible interconversion of serine and glycine with tetrahydrofolate (THF) serving as the one-carbon carrier. This reaction serves as the major source of one-carbon groups required for the biosynthesis of purines, thymidylate, methionine, and other important biomolecules. Also exhibits THF-independent aldolase activity toward beta-hydroxyamino acids, producing glycine and aldehydes, via a retro-aldol mechanism. In Shouchella clausii (strain KSM-K16) (Alkalihalobacillus clausii), this protein is Serine hydroxymethyltransferase.